We begin with the raw amino-acid sequence, 393 residues long: Acetylornithine aminotransferase (393 aa).

Residues 100 to 101 and Phe-132 each bind pyridoxal 5'-phosphate; that span reads GT. Arg-135 lines the N(2)-acetyl-L-ornithine pocket. A pyridoxal 5'-phosphate-binding site is contributed by 217–220; the sequence is DEIQ. Residue Lys-246 is modified to N6-(pyridoxal phosphate)lysine. Residue Ser-275 participates in N(2)-acetyl-L-ornithine binding. Pyridoxal 5'-phosphate is bound at residue Thr-276.

This sequence belongs to the class-III pyridoxal-phosphate-dependent aminotransferase family. ArgD subfamily. As to quaternary structure, homodimer. Pyridoxal 5'-phosphate serves as cofactor.

It is found in the cytoplasm. The enzyme catalyses N(2)-acetyl-L-ornithine + 2-oxoglutarate = N-acetyl-L-glutamate 5-semialdehyde + L-glutamate. Its pathway is amino-acid biosynthesis; L-arginine biosynthesis; N(2)-acetyl-L-ornithine from L-glutamate: step 4/4. This chain is Acetylornithine aminotransferase, found in Campylobacter jejuni subsp. jejuni serotype O:2 (strain ATCC 700819 / NCTC 11168).